The following is a 375-amino-acid chain: Stimulator of interferon genes protein 2 (375 aa).

Helical transmembrane passes span 30–50 (TATV…LLAV), 60–80 (IHFL…GELV), 114–134 (AGSI…VLYE), and 144–164 (YPIL…LVGL). The 2',3'-cGAMP site is built by Y195, R256, and R262.

The protein belongs to the STING family.

It is found in the membrane. In terms of biological role, facilitator of innate immune signaling that acts as a sensor of second messenger signals produced by cyclic GMP-AMP synthase-like receptors (cGLRs) and promotes the production of type I interferon. Innate immune response is triggered in response to nucleotides from viruses and bacteria delivered to the cytoplasm. Acts by binding cyclic dinucleotides: recognizes and binds 2'-3' linked cGAMP (2'-3'-cGAMP), a second messengers produced by cGLRs in response to nucleotides in the cytosol, such as double-stranded RNA (dsRNA). Upon binding to 2'-3'-cGAMP, oligomerizes and promotes the recruitment and subsequent activation of the transcription factor IRF3 to induce expression of type I interferon. This Stylophora pistillata (Smooth cauliflower coral) protein is Stimulator of interferon genes protein 2.